A 136-amino-acid polypeptide reads, in one-letter code: Single-stranded DNA-binding protein 1 (136 aa).

The 106-residue stretch at 4 to 109 (LNKMQLIGNL…IMAKEMQMLG (106 aa)) folds into the SSB domain. Residues 109 to 136 (GKKQDNNKVGNARHGDALPADEDDYYDF) form a disordered region. Residues 127-136 (PADEDDYYDF) show a composition bias toward acidic residues.

In terms of assembly, homotetramer.

This Xylella fastidiosa (strain 9a5c) protein is Single-stranded DNA-binding protein 1 (ssb1).